The chain runs to 523 residues: MDASSTPGAIWVVLTVILAAIPIWVCHMVNTLWLRPKRLERHLRAQGLHGDPYKLSLDNSKQTYMLKLQQEAQSKSIGLSKDDAAPRIFSLAHQTVHKYGKNSFAWEGTAPKVIITDPEQIKEVFNKIQDFPKPKLNPIAKYISIGLVQYEGDKWAKHRKIINPAFHLEKLKGMLPAFSHSCHEMISKWKGLLSSDGTCEVDVWPFLQNLTCDVISRTAFGSSYAEGAKIFELLKRQGYALMTARYARIPLWWLLPSTTKRRMKEIERGIRDSLEGIIRKREKALKSGKSTDDDLLGILLQSNHIENKGDENSKSAGMTTQEVMEECKLFYLAGQETTAALLAWTMVLLGKHPEWQARARQEVLQVFGNQNPNFEGLGRLKIVTMILYEVLRLYPPGIYLTRALRKDLKLGNLLLPAGVQVSVPILLIHHDEGIWGNDAKEFNPERFAEGIAKATKGQVCYFPFGWGPRICVGQNFALLEAKIVLSLLLQNFSFELSPTYAHVPTTVLTLQPKHGAPIILHKL.

A helical transmembrane segment spans residues 9–29 (AIWVVLTVILAAIPIWVCHMV). Residue C471 participates in heme binding.

Belongs to the cytochrome P450 family. It depends on heme as a cofactor. In terms of tissue distribution, expressed in roots, stolons and stems. Not detected in leaves.

Its subcellular location is the membrane. It carries out the reaction 11-oxo-beta-amyrin + 3 reduced [NADPH--hemoprotein reductase] + 3 O2 = glycyrrhetinate + 3 oxidized [NADPH--hemoprotein reductase] + 4 H2O + 4 H(+). It catalyses the reaction 11-oxo-beta-amyrin + reduced [NADPH--hemoprotein reductase] + O2 = 30-hydroxy-11-oxo-beta-amyrin + oxidized [NADPH--hemoprotein reductase] + H2O + H(+). The enzyme catalyses 30-hydroxy-11-oxo-beta-amyrin + reduced [NADPH--hemoprotein reductase] + O2 = glycyrrhetaldehyde + oxidized [NADPH--hemoprotein reductase] + 2 H2O + H(+). The catalysed reaction is glycyrrhetaldehyde + reduced [NADPH--hemoprotein reductase] + O2 = glycyrrhetinate + oxidized [NADPH--hemoprotein reductase] + H2O + 2 H(+). Functionally, involved in the biosynthesis of Glycyrrhetinic acid (GA), a natural product which exhibits anti-inflammatory activity. Involved in the biosynthesis of the triterpenoid saponin glycyrrhizin. Catalyzes three sequential oxidation steps at C-30 of 11-oxo-beta-amyrin. Also able to catalyze C-30 monohydroxylation of beta-amyrin to produce 30-hydroxy-beta-amyrin. May be also responsible for the oxidation at positions C-22 and C-29 in addition to C-30. This Glycyrrhiza uralensis (Chinese licorice) protein is 11-oxo-beta-amyrin 30-oxidase.